We begin with the raw amino-acid sequence, 64 residues long: Large ribosomal subunit protein bL33c (64 aa).

The protein belongs to the bacterial ribosomal protein bL33 family.

It localises to the plastid. Its subcellular location is the chloroplast. The polypeptide is Large ribosomal subunit protein bL33c (Huperzia lucidula (Shining clubmoss)).